Consider the following 539-residue polypeptide: Beta-apo-4'-carotenal oxygenase (539 aa).

Residues glutamate 228 and cysteine 262 contribute to the active site.

It belongs to the aldehyde dehydrogenase family.

It catalyses the reaction 4'-apo-beta-carotenal + NAD(+) + H2O = neurosporaxanthin + NADH + 2 H(+). Functionally, beta-apo-4'-carotenal oxygenase involved in the last step of synthesis of neurosporaxanthin, a carboxylic apocarotenoid acting as an essential protective pigments and leading to orange pigmentation. Converts the aldehyde beta-apo-4'-carotenal into neurosporaxanthin. Is also able to use shorter apocarotenals as substrates (such as beta-apo-8'-carotenal (C30), beta-apo-10'-carotenal (C27), or the acyclic apocarotenal apo-8'-lycopenal (C30)), indicating wide substrate specificity. Neurosporaxanthin is synthesized from geranyl-geranyl pyrophosphate (GGPP) through several enzymatic activities. Phytoene synthase activity performed by the bifunctional enzyme carAR first produces phytoene from geranyl-geranyl pyrophosphate (GGPP). The phytoene dehydrogenase carB then introduces 4 desaturations to lead to lycopene which is substrate of the carotene cyclase activity of carAR that leads to the production of gamma-carotene. CarB then performs a 5th desaturation reaction to yield torulene. Torulene is the substrate of the dioxidase carT that breaks the molecule, removing five carbon atoms to yield beta-apo-4'-carotenal, whereas the aldehyde dehydrogenase carD mediates the last step by converting beta-apo-4'-carotenal into neurosporaxanthin. This Gibberella fujikuroi (strain CBS 195.34 / IMI 58289 / NRRL A-6831) (Bakanae and foot rot disease fungus) protein is Beta-apo-4'-carotenal oxygenase.